A 241-amino-acid polypeptide reads, in one-letter code: Uridylate kinase (241 aa).

15–18 contributes to the ATP binding site; that stretch reads KLSG. Positions 23-28 are involved in allosteric activation by GTP; sequence GAEGFG. Gly-57 is a UMP binding site. ATP is bound by residues Gly-58 and Arg-62. UMP-binding positions include Asp-77 and 138–145; that span reads TGNPFFTT. Residues Thr-165, Tyr-171, and Asp-174 each contribute to the ATP site.

Belongs to the UMP kinase family. As to quaternary structure, homohexamer.

It localises to the cytoplasm. It carries out the reaction UMP + ATP = UDP + ADP. The protein operates within pyrimidine metabolism; CTP biosynthesis via de novo pathway; UDP from UMP (UMPK route): step 1/1. Its activity is regulated as follows. Allosterically activated by GTP. Inhibited by UTP. Its function is as follows. Catalyzes the reversible phosphorylation of UMP to UDP. This is Uridylate kinase from Serratia proteamaculans (strain 568).